The primary structure comprises 160 residues: General odorant-binding protein 2 (160 aa).

The first 19 residues, 1–19, serve as a signal peptide directing secretion; sequence MGYKLLLMYIAIVIDSVIG. 3 cysteine pairs are disulfide-bonded: cysteine 38–cysteine 73, cysteine 69–cysteine 127, and cysteine 116–cysteine 136.

The protein belongs to the PBP/GOBP family. In terms of tissue distribution, antenna.

Functionally, present in the aqueous fluid surrounding olfactory sensory dendrites and are thought to aid in the capture and transport of hydrophobic odorants into and through this fluid. This is General odorant-binding protein 2 from Antheraea pernyi (Chinese oak silk moth).